The chain runs to 244 residues: MSMLCYTLIIAFLIGIWAAPKSEDNVPLGSPATSDLSDTSCAQTHEGLKTSRNTDQRHPAPKKAEDQELGSVANIIVDPKLFQKRRFQSPRVLFSTQPPPLSRDEQSVEFLDNEDTLNRNIRAKRENHPVHNQGEHSVCDSVSDWVIKTTATDIRGNMVTVMVDINRNNEVYKQYFFETKCRNPNPNPVQSECRGIDSRLWNSYCTTTQTFVRALTMEGNQASWRFIRIDTACVCVIIRKTDNF.

An N-terminal signal peptide occupies residues 1–18 (MSMLCYTLIIAFLIGIWA). Residues 19–125 (APKSEDNVPL…TLNRNIRAKR (107 aa)) constitute a propeptide that is removed on maturation. A compositionally biased stretch (basic and acidic residues) spans 47-66 (GLKTSRNTDQRHPAPKKAED). Residues 47–67 (GLKTSRNTDQRHPAPKKAEDQ) are disordered. Intrachain disulfides connect cysteine 139–cysteine 205, cysteine 181–cysteine 233, and cysteine 193–cysteine 235.

It belongs to the NGF-beta family. In terms of assembly, homodimer; non-covalently linked. In terms of tissue distribution, expressed by the venom gland.

Its subcellular location is the secreted. In terms of biological role, nerve growth factor is important for the development and maintenance of the sympathetic and sensory nervous systems. It stimulates division and differentiation of sympathetic and embryonic sensory neurons as well as basal forebrain cholinergic neurons in the brain. Its relevance in the snake venom is not clear. However, it has been shown to inhibit metalloproteinase-dependent proteolysis of platelet glycoprotein Ib alpha, suggesting a metalloproteinase inhibition to prevent metalloprotease autodigestion and/or protection against prey proteases. Binds a lipid between the two protein chains in the homodimer. The lipid-bound form promotes histamine relase from mouse mast cells, contrary to the lipid-free form. In Notechis scutatus scutatus (Mainland tiger snake), this protein is Venom nerve growth factor 1.